The primary structure comprises 540 residues: GMP synthase [glutamine-hydrolyzing] (540 aa).

Positions 26 to 216 (IIIILDFGSQ…VYHICECEPT (191 aa)) constitute a Glutamine amidotransferase type-1 domain. Cysteine 103 serves as the catalytic Nucleophile. Catalysis depends on residues histidine 190 and glutamate 192. A GMPS ATP-PPase domain is found at 217–415 (WTTAAFVEEA…VGLPEEIVQR (199 aa)). ATP is bound at residue 244-250 (SGGVDSS).

Homodimer.

The catalysed reaction is XMP + L-glutamine + ATP + H2O = GMP + L-glutamate + AMP + diphosphate + 2 H(+). Its pathway is purine metabolism; GMP biosynthesis; GMP from XMP (L-Gln route): step 1/1. Catalyzes the synthesis of GMP from XMP. This chain is GMP synthase [glutamine-hydrolyzing], found in Nostoc sp. (strain PCC 7120 / SAG 25.82 / UTEX 2576).